Reading from the N-terminus, the 98-residue chain is NADH-ubiquinone oxidoreductase chain 4L (98 aa).

3 consecutive transmembrane segments (helical) span residues 1–21, 26–46, and 59–79; these read MTTIYLNLILAFTLALSGVLI, LLSTLLCLEGMMLSLFILMAL, and APLILLVFSACEAGVGLALLV.

The protein belongs to the complex I subunit 4L family. Core subunit of respiratory chain NADH dehydrogenase (Complex I) which is composed of 45 different subunits.

Its subcellular location is the mitochondrion inner membrane. It catalyses the reaction a ubiquinone + NADH + 5 H(+)(in) = a ubiquinol + NAD(+) + 4 H(+)(out). Functionally, core subunit of the mitochondrial membrane respiratory chain NADH dehydrogenase (Complex I) which catalyzes electron transfer from NADH through the respiratory chain, using ubiquinone as an electron acceptor. Part of the enzyme membrane arm which is embedded in the lipid bilayer and involved in proton translocation. This Rhyncholestes raphanurus (Chilean shrew opossum) protein is NADH-ubiquinone oxidoreductase chain 4L (MT-ND4L).